Consider the following 103-residue polypeptide: Pyrimidine/purine nucleoside phosphorylase (103 aa).

It belongs to the nucleoside phosphorylase PpnP family.

The enzyme catalyses a purine D-ribonucleoside + phosphate = a purine nucleobase + alpha-D-ribose 1-phosphate. It catalyses the reaction adenosine + phosphate = alpha-D-ribose 1-phosphate + adenine. The catalysed reaction is cytidine + phosphate = cytosine + alpha-D-ribose 1-phosphate. It carries out the reaction guanosine + phosphate = alpha-D-ribose 1-phosphate + guanine. The enzyme catalyses inosine + phosphate = alpha-D-ribose 1-phosphate + hypoxanthine. It catalyses the reaction thymidine + phosphate = 2-deoxy-alpha-D-ribose 1-phosphate + thymine. The catalysed reaction is uridine + phosphate = alpha-D-ribose 1-phosphate + uracil. It carries out the reaction xanthosine + phosphate = alpha-D-ribose 1-phosphate + xanthine. In terms of biological role, catalyzes the phosphorolysis of diverse nucleosides, yielding D-ribose 1-phosphate and the respective free bases. Can use uridine, adenosine, guanosine, cytidine, thymidine, inosine and xanthosine as substrates. Also catalyzes the reverse reactions. This chain is Pyrimidine/purine nucleoside phosphorylase, found in Shewanella sp. (strain W3-18-1).